A 429-amino-acid polypeptide reads, in one-letter code: Saccharopine dehydrogenase-like oxidoreductase (429 aa).

Alanine 2 bears the N-acetylalanine mark. Phosphoserine is present on serine 217.

Belongs to the saccharopine dehydrogenase family.

The sequence is that of Saccharopine dehydrogenase-like oxidoreductase (SCCPDH) from Pongo abelii (Sumatran orangutan).